The sequence spans 525 residues: ATP synthase subunit alpha (525 aa).

169 to 176 (GDRQTGKT) lines the ATP pocket.

It belongs to the ATPase alpha/beta chains family. F-type ATPases have 2 components, CF(1) - the catalytic core - and CF(0) - the membrane proton channel. CF(1) has five subunits: alpha(3), beta(3), gamma(1), delta(1), epsilon(1). CF(0) has three main subunits: a(1), b(2) and c(9-12). The alpha and beta chains form an alternating ring which encloses part of the gamma chain. CF(1) is attached to CF(0) by a central stalk formed by the gamma and epsilon chains, while a peripheral stalk is formed by the delta and b chains.

The protein resides in the cell membrane. The catalysed reaction is ATP + H2O + 4 H(+)(in) = ADP + phosphate + 5 H(+)(out). In terms of biological role, produces ATP from ADP in the presence of a proton gradient across the membrane. The alpha chain is a regulatory subunit. In Mycoplasma mycoides subsp. mycoides SC (strain CCUG 32753 / NCTC 10114 / PG1), this protein is ATP synthase subunit alpha.